The chain runs to 68 residues: Protein transport protein Sec61 subunit gamma (68 aa).

The Cytoplasmic segment spans residues 1-32 (MDQVTKFIEPGRQFAKDSIRLVKRCTKPDRKE). The helical transmembrane segment at 33 to 61 (FQKIAVATAIGFCIMGFIGFFVKLIHIPI) threads the bilayer. Residues 62 to 68 (NNIIVGS) lie on the Extracellular side of the membrane.

This sequence belongs to the SecE/SEC61-gamma family. As to quaternary structure, heterotrimeric complex composed of SEC61-alpha, SEC61-beta and SEC61-gamma.

The protein resides in the endoplasmic reticulum membrane. Necessary for protein translocation in the endoplasmic reticulum. This chain is Protein transport protein Sec61 subunit gamma (SEC61G), found in Gryllotalpa orientalis (Oriental mole cricket).